The sequence spans 194 residues: Orotate phosphoribosyltransferase (194 aa).

117-125 (EDVVTTGLS) is a binding site for 5-phospho-alpha-D-ribose 1-diphosphate. Orotate is bound by residues Thr121 and Arg149.

It belongs to the purine/pyrimidine phosphoribosyltransferase family. PyrE subfamily. As to quaternary structure, homodimer. Mg(2+) serves as cofactor.

The catalysed reaction is orotidine 5'-phosphate + diphosphate = orotate + 5-phospho-alpha-D-ribose 1-diphosphate. It participates in pyrimidine metabolism; UMP biosynthesis via de novo pathway; UMP from orotate: step 1/2. Catalyzes the transfer of a ribosyl phosphate group from 5-phosphoribose 1-diphosphate to orotate, leading to the formation of orotidine monophosphate (OMP). In Novosphingobium aromaticivorans (strain ATCC 700278 / DSM 12444 / CCUG 56034 / CIP 105152 / NBRC 16084 / F199), this protein is Orotate phosphoribosyltransferase.